Consider the following 305-residue polypeptide: P2Y purinoceptor 14 (305 aa).

At 1–29 (MDNTTTTEPPKQPCTRNTLITQQIIPMLY) the chain is on the extracellular side. N-linked (GlcNAc...) asparagine glycosylation is present at Asn3. Residues 30–50 (CVVFITGVLLNGISGWIFFYV) form a helical membrane-spanning segment. The Cytoplasmic portion of the chain corresponds to 51–55 (PSSKS). The chain crosses the membrane as a helical span at residues 56–76 (FIIYLKNIVVADFLMGLTFPF). Residues 77–96 (KVLSDSGLGPWQLNVFVFRV) are Extracellular-facing. Residues 97-117 (SAVIFYVNMYVSIAFFGLISF) traverse the membrane as a helical segment. Over 118-139 (DRYYKIVKPLLVSIVQSVNYSK) the chain is Cytoplasmic. Residues 140–160 (VLSVLVWVLMLLLAVPNIILT) traverse the membrane as a helical segment. The N-linked (GlcNAc...) asparagine glycan is linked to Asn161. Over 161–188 (NQSVKDVTNIQCMELKNELGRKWHKASN) the chain is Extracellular. A helical membrane pass occupies residues 189 to 209 (YVFVSIFWIVFLLLTVFYMAI). The Cytoplasmic portion of the chain corresponds to 210–234 (TRKIFKSHLKSRKNSISVKRKSSRN). The helical transmembrane segment at 235-255 (IFSIVLAFVACFAPYHVARIP) threads the bilayer. The Extracellular segment spans residues 256–278 (YTKSQTEGHYSCQAKETLLYTKE). Residues 279–299 (FTLLLSAANVCLDPISISSYA) traverse the membrane as a helical segment. Topologically, residues 300 to 305 (SRLEKS) are cytoplasmic.

Belongs to the G-protein coupled receptor 1 family.

It localises to the cell membrane. In terms of biological role, receptor for UDP-glucose coupled to G-proteins. The chain is P2Y purinoceptor 14 (P2ry14) from Rattus norvegicus (Rat).